A 167-amino-acid polypeptide reads, in one-letter code: Peptide deformylase (167 aa).

The Fe cation site is built by C91 and H133. The active site involves E134. H137 contributes to the Fe cation binding site.

It belongs to the polypeptide deformylase family. Fe(2+) serves as cofactor.

It catalyses the reaction N-terminal N-formyl-L-methionyl-[peptide] + H2O = N-terminal L-methionyl-[peptide] + formate. Its function is as follows. Removes the formyl group from the N-terminal Met of newly synthesized proteins. Requires at least a dipeptide for an efficient rate of reaction. N-terminal L-methionine is a prerequisite for activity but the enzyme has broad specificity at other positions. The protein is Peptide deformylase of Buchnera aphidicola subsp. Schizaphis graminum (strain Sg).